A 103-amino-acid polypeptide reads, in one-letter code: Histone H4 (103 aa).

Lys6 is subject to N6-acetyl-N6-methyllysine; alternate. N6-methyllysine; alternate is present on residues Lys6, Lys9, and Lys13. Lys13 is modified (N6-acetyl-N6-methyllysine; alternate). Residues 17-21 (KRHRK) mediate DNA binding. Position 92 is an N6-glutaryllysine (Lys92).

This sequence belongs to the histone H4 family. In terms of assembly, the nucleosome is a histone octamer containing two molecules each of H2A, H2B, H3 and H4 assembled in one H3-H4 heterotetramer and two H2A-H2B heterodimers. The octamer wraps approximately 147 bp of DNA. Glutarylation at Lys-92 (H4K91glu) destabilizes nucleosomes by promoting dissociation of the H2A-H2B dimers from nucleosomes.

It localises to the nucleus. It is found in the chromosome. Functionally, core component of nucleosome. Nucleosomes wrap and compact DNA into chromatin, limiting DNA accessibility to the cellular machineries which require DNA as a template. Histones thereby play a central role in transcription regulation, DNA repair, DNA replication and chromosomal stability. DNA accessibility is regulated via a complex set of post-translational modifications of histones, also called histone code, and nucleosome remodeling. The chain is Histone H4 (ahsb4) from Blastobotrys adeninivorans (Yeast).